The chain runs to 214 residues: 3-demethoxyubiquinol 3-hydroxylase (214 aa).

Fe cation-binding residues include glutamate 63, glutamate 93, histidine 96, glutamate 145, glutamate 177, and histidine 180.

The protein belongs to the COQ7 family. Fe cation serves as cofactor.

It localises to the cell membrane. It catalyses the reaction a 5-methoxy-2-methyl-3-(all-trans-polyprenyl)benzene-1,4-diol + AH2 + O2 = a 3-demethylubiquinol + A + H2O. Its pathway is cofactor biosynthesis; ubiquinone biosynthesis. Its function is as follows. Catalyzes the hydroxylation of 2-nonaprenyl-3-methyl-6-methoxy-1,4-benzoquinol during ubiquinone biosynthesis. The sequence is that of 3-demethoxyubiquinol 3-hydroxylase from Nitrosococcus oceani (strain ATCC 19707 / BCRC 17464 / JCM 30415 / NCIMB 11848 / C-107).